Consider the following 205-residue polypeptide: Small ribosomal subunit protein uS4 (205 aa).

Residues 27 to 46 are disordered; sequence LNKRDYAPGQHGQRRKGKPS. The region spanning 118 to 178 is the S4 RNA-binding domain; it reads HGHVLVNGKR…HVDHRLMKGT (61 aa).

It belongs to the universal ribosomal protein uS4 family. Part of the 30S ribosomal subunit. Contacts protein S5. The interaction surface between S4 and S5 is involved in control of translational fidelity.

One of the primary rRNA binding proteins, it binds directly to 16S rRNA where it nucleates assembly of the body of the 30S subunit. Functionally, with S5 and S12 plays an important role in translational accuracy. The protein is Small ribosomal subunit protein uS4 of Granulibacter bethesdensis (strain ATCC BAA-1260 / CGDNIH1).